The chain runs to 221 residues: DNA replication complex GINS protein SLD5 (221 aa).

The protein belongs to the GINS4/SLD5 family. Component of the GINS complex which is a heterotetramer of gins1/psf1, gins2/psf2, gins3/psf3 and gins4/sld5. Component of the CMG helicase complex, composed of the mcm2-7 complex, the GINS complex and cdc45.

The protein resides in the nucleus. Its subcellular location is the chromosome. It is found in the cytoplasm. Functionally, required for initiation of chromosomal DNA replication. Core component of CDC45-MCM-GINS (CMG) helicase, the molecular machine that unwinds template DNA during replication, and around which the replisome is built. The protein is DNA replication complex GINS protein SLD5 of Xenopus laevis (African clawed frog).